Consider the following 167-residue polypeptide: Endothelin-3 (167 aa).

Residues 1-19 form the signal peptide; the sequence is MELGLWLLLGLTVTSAAAA. Residues 20 to 50 constitute a propeptide that is removed on maturation; that stretch reads LPAQPGNAGQERGPGRSGDQEEKRVPAHHRP. Residues 22 to 45 are disordered; sequence AQPGNAGQERGPGRSGDQEEKRVP. Intrachain disulfides connect cysteine 53–cysteine 67 and cysteine 55–cysteine 63. A propeptide spanning residues 74-167 is cleaved from the precursor; sequence INTPEQTVPY…KSRTDKVHQP (94 aa). Residues 85–112 are disordered; that stretch reads LSNHRGSLRGKRSSGPVPESSQSSPQTR. Residues 97-109 are compositionally biased toward low complexity; it reads SSGPVPESSQSSP. The segment at 115 to 135 is endothelin-like; the sequence is CACSGVDDKACAYFCAHVTSY. Over residues 140 to 149 the composition is skewed to basic and acidic residues; sequence EKAAAEEKQE. The segment at 140–167 is disordered; it reads EKAAAEEKQETGGPRQRLKSRTDKVHQP.

The protein belongs to the endothelin/sarafotoxin family.

The protein resides in the secreted. Functionally, endothelins are endothelium-derived vasoconstrictor peptides. The sequence is that of Endothelin-3 (Edn3) from Rattus norvegicus (Rat).